A 469-amino-acid polypeptide reads, in one-letter code: Ribulose bisphosphate carboxylase large chain (469 aa).

Position 5 is an N6,N6,N6-trimethyllysine (Lys5). Substrate is bound by residues Asn114 and Thr164. The active-site Proton acceptor is Lys166. Position 168 (Lys168) interacts with substrate. Mg(2+)-binding residues include Lys192, Asp194, and Glu195. The residue at position 192 (Lys192) is an N6-carboxylysine. The active-site Proton acceptor is His285. Residues Arg286, His318, and Ser370 each coordinate substrate.

Belongs to the RuBisCO large chain family. Type I subfamily. Heterohexadecamer of 8 large chains and 8 small chains; disulfide-linked. The disulfide link is formed within the large subunit homodimers. Requires Mg(2+) as cofactor. In terms of processing, the disulfide bond which can form in the large chain dimeric partners within the hexadecamer appears to be associated with oxidative stress and protein turnover.

Its subcellular location is the plastid. The protein localises to the chloroplast. It carries out the reaction 2 (2R)-3-phosphoglycerate + 2 H(+) = D-ribulose 1,5-bisphosphate + CO2 + H2O. The catalysed reaction is D-ribulose 1,5-bisphosphate + O2 = 2-phosphoglycolate + (2R)-3-phosphoglycerate + 2 H(+). RuBisCO catalyzes two reactions: the carboxylation of D-ribulose 1,5-bisphosphate, the primary event in carbon dioxide fixation, as well as the oxidative fragmentation of the pentose substrate in the photorespiration process. Both reactions occur simultaneously and in competition at the same active site. This Cephalanthus occidentalis (Common buttonbush) protein is Ribulose bisphosphate carboxylase large chain.